The sequence spans 267 residues: D-aminoacyl-tRNA deacylase (267 aa).

This sequence belongs to the DtdA deacylase family. In terms of assembly, monomer. It depends on Zn(2+) as a cofactor.

It carries out the reaction a D-aminoacyl-tRNA + H2O = a tRNA + a D-alpha-amino acid + H(+). The enzyme catalyses glycyl-tRNA(Ala) + H2O = tRNA(Ala) + glycine + H(+). D-aminoacyl-tRNA deacylase with broad substrate specificity. By recycling D-aminoacyl-tRNA to D-amino acids and free tRNA molecules, this enzyme counteracts the toxicity associated with the formation of D-aminoacyl-tRNA entities in vivo. The chain is D-aminoacyl-tRNA deacylase from Methanothrix thermoacetophila (strain DSM 6194 / JCM 14653 / NBRC 101360 / PT) (Methanosaeta thermophila).